A 1070-amino-acid chain; its full sequence is TSC22 domain family protein 1 (1070 aa).

Positions 1 to 98 (MHQPPESTAA…SQAQLQAQPL (98 aa)) are required for interaction with TGFBR1 and promotion of TGF-beta signaling. Disordered stretches follow at residues 1 to 110 (MHQP…KKSG), 125 to 289 (ISSN…PASV), 458 to 487 (VTSE…VGSG), 604 to 637 (YSQA…STQM), and 830 to 858 (TSQV…AQTP). Over residues 36-45 (GSASALNAAG) the composition is skewed to low complexity. Pro residues predominate over residues 58–70 (FPPPSLLQPPPPA). Residues 84–100 (SLNLLSQAQLQAQPLAP) show a composition bias toward low complexity. The segment covering 133–142 (EDTESYDDLD) has biased composition (acidic residues). A compositionally biased stretch (basic residues) spans 216–240 (HPHHLHHHHHIHHGHHLQHGHHHPS). Residues 241–250 (HVAVASASIP) are compositionally biased toward low complexity. A compositionally biased stretch (polar residues) spans 261 to 271 (KLSTTGSSDSI). Phosphoserine is present on Ser-263. 2 stretches are compositionally biased toward low complexity: residues 272–289 (TPVA…PASV) and 465–478 (TSGS…STRS). The span at 611–622 (VQTPLPGAPPPQ) shows a compositional bias: pro residues. A compositionally biased stretch (low complexity) spans 830 to 845 (TSQVSSAGPSGMPSAP). The segment covering 849–858 (VPPQNIAQTP) has biased composition (polar residues). The tract at residues 1003–1024 (LKEQIKELIEKNSQLEQENNLL) is leucine-zipper. The segment at 1034–1070 (AQFQAQLQTGSPPATTQPQGTTQPPAQPASQGSGPTA) is disordered. Residues 1041–1070 (QTGSPPATTQPQGTTQPPAQPASQGSGPTA) show a composition bias toward low complexity.

This sequence belongs to the TSC-22/Dip/Bun family. Forms homodimers. Forms heterodimers. Component of a complex composed of TSC22D1 (via N-terminus), TGFBR1 and TGFBR2; the interaction between TSC22D1 and TGFBR1 is inhibited by SMAD7 and promoted by TGFB1. Interacts with SMAD7; the interaction requires TGF-beta and the interaction is inhibited by TGFBR1. Interacts with TPT1/fortilin; interaction results in the destabilization of TSC22D1 protein and prevents TSC22D1-mediated apoptosis. Interacts with SMAD4 (via N-terminus). Interacts with ACVRL1/ALK1, ACVR1/ALK2, BMPR1A/ALK3, ACVR1B/ALK4, BMPR1B/ALK6, ACVR2A/ACTRII, and BMPR2. Interacts with SMAD6. Interacts with TFE3; the interaction is enhanced in the presence of TGF-beta. In terms of assembly, forms a heterodimer with TSC22D4/THG1. As to quaternary structure, forms a heterodimer with TSC22D4/THG1. Interacts with histone H1-2. Interacts with GNL3.

The protein resides in the cytoplasm. It localises to the nucleus. The protein localises to the cell membrane. It is found in the mitochondrion. Functionally, transcriptional repressor. Acts on the C-type natriuretic peptide (CNP) promoter. Acts to promote CASP3-mediated apoptosis. Positively regulates TGF-beta signaling by interacting with SMAD7 which inhibits binding of SMAD7 to TGFBR1, preventing recruitment of SMURF ubiquitin ligases to TGFBR1 and inhibiting SMURF-mediated ubiquitination and degradation of TGFBR1. Contributes to enhancement of TGF-beta signaling by binding to and modulating the transcription activator activity of SMAD4. Promotes TGF-beta-induced transcription of COL1A2; via its interaction with TFE3 at E-boxes in the gene proximal promoter. Plays a role in the repression of hematopoietic precursor cell growth. Promotes IL2 deprivation-induced apoptosis in T-lymphocytes, via repression of TSC22D3/GILZ transcription and activation of the caspase cascade. Its function is as follows. May act to negatively regulate TGFB3 signaling and thereby inhibit cell death in mammary gland cells. Positively regulates cell death in response to TGFB3 during mammary gland involution. The protein is TSC22 domain family protein 1 of Pongo abelii (Sumatran orangutan).